The sequence spans 41 residues: Large ribosomal subunit protein bL36B (41 aa).

This sequence belongs to the bacterial ribosomal protein bL36 family.

The sequence is that of Large ribosomal subunit protein bL36B from Neisseria meningitidis serogroup C (strain 053442).